Consider the following 120-residue polypeptide: Small ribosomal subunit protein uS13 (120 aa).

Residues 93-120 (RRGLPCRGQKTKTNARTRKGKRKTVGAA) form a disordered region.

The protein belongs to the universal ribosomal protein uS13 family. Part of the 30S ribosomal subunit. Forms a loose heterodimer with protein S19. Forms two bridges to the 50S subunit in the 70S ribosome.

Its function is as follows. Located at the top of the head of the 30S subunit, it contacts several helices of the 16S rRNA. In the 70S ribosome it contacts the 23S rRNA (bridge B1a) and protein L5 of the 50S subunit (bridge B1b), connecting the 2 subunits; these bridges are implicated in subunit movement. Contacts the tRNAs in the A and P-sites. This is Small ribosomal subunit protein uS13 from Sulfurovum sp. (strain NBC37-1).